Consider the following 653-residue polypeptide: Endoglin (653 aa).

Residues 1–24 (MDRGVLPQAIALLLAVCSFGPTAG) form the signal peptide. Over 25 to 581 (LAEGVQCDLQ…IVSPGLPDKG (557 aa)) the chain is Extracellular. Residues 27-44 (EGVQCDLQPVDPKVTYTT) are OR1, N-terminal part. The segment at 27-336 (EGVQCDLQPV…RSCGSGLQPS (310 aa)) is required for interaction with GDF2. Disulfide bonds link cysteine 31–cysteine 206, cysteine 51–cysteine 181, cysteine 241–cysteine 329, cysteine 349–cysteine 381, cysteine 362–cysteine 442, cysteine 393–cysteine 411, and cysteine 493–cysteine 549. The segment at 45 to 198 (SQVSEGCVAH…MGHTLEWKSH (154 aa)) is OR2. N-linked (GlcNAc...) asparagine glycosylation occurs at asparagine 57. The interval 199–329 (TQASVLGCHL…SVISLQDRSC (131 aa)) is OR1, C-terminal part. The segment at 269–281 (KAWTTGEYSFKIF) is essential for interaction with GDF2. N-linked (GlcNAc...) asparagine glycosylation occurs at asparagine 306. The 151-residue stretch at 362–512 (CSDDVMTLVL…MVDLIQNQEA (151 aa)) folds into the ZP domain. Residues 582-606 (LVLPAVLGITFGAFLIGALLTAALW) form a helical membrane-spanning segment. Residues 607 to 653 (YIHSHTRHPGKREPVVAVAAPASSESSSTNHSIGSTQSTPCSTSSMA) are Cytoplasmic-facing. Residues 625-634 (AAPASSESSS) show a composition bias toward low complexity. The tract at residues 625–653 (AAPASSESSSTNHSIGSTQSTPCSTSSMA) is disordered. A compositionally biased stretch (polar residues) spans 635 to 653 (TNHSIGSTQSTPCSTSSMA). 2 positions are modified to phosphoserine; by TGFBR1: serine 641 and serine 644.

Homodimer; disulfide-linked. Forms a heteromeric complex with the signaling receptors for transforming growth factor-beta: TGFBR1 and/or TGFBR2. It is able to bind TGFB1 and TGFB2 with high affinity, but not TGFB3. Interacts with GDF2, forming a heterotetramer with a 2:2 stoichiometry. Interacts with ACVRL1. Can form a heteromeric complex with GDF2 and ACVRL1. Interacts with BMP10. Interacts with DYNLT4. Interacts with ARRB2.

The protein localises to the cell membrane. Functionally, vascular endothelium glycoprotein that plays an important role in the regulation of angiogenesis. Required for normal structure and integrity of adult vasculature. Regulates the migration of vascular endothelial cells. Required for normal extraembryonic angiogenesis and for embryonic heart development. May regulate endothelial cell shape changes in response to blood flow, which drive vascular remodeling and establishment of normal vascular morphology during angiogenesis. May play a role in the binding of endothelial cells to integrins. Acts as a TGF-beta coreceptor and is involved in the TGF-beta/BMP signaling cascade that ultimately leads to the activation of SMAD transcription factors. Required for GDF2/BMP9 signaling through SMAD1 in endothelial cells and modulates TGFB1 signaling through SMAD3. The sequence is that of Endoglin (ENG) from Sus scrofa (Pig).